A 188-amino-acid polypeptide reads, in one-letter code: dCTP deaminase (188 aa).

Residues 111–116 (KSTYAR), 135–137 (TLE), Gln-156, Tyr-170, Lys-179, and Gln-180 contribute to the dCTP site. The Proton donor/acceptor role is filled by Glu-137.

The protein belongs to the dCTP deaminase family. Homotrimer.

It catalyses the reaction dCTP + H2O + H(+) = dUTP + NH4(+). Its pathway is pyrimidine metabolism; dUMP biosynthesis; dUMP from dCTP (dUTP route): step 1/2. Catalyzes the deamination of dCTP to dUTP. The polypeptide is dCTP deaminase (Orientia tsutsugamushi (strain Ikeda) (Rickettsia tsutsugamushi)).